Reading from the N-terminus, the 287-residue chain is uncharacterized protein (287 aa).

This is an uncharacterized protein from Archaeoglobus fulgidus (strain ATCC 49558 / DSM 4304 / JCM 9628 / NBRC 100126 / VC-16).